The sequence spans 115 residues: MPPSTVNQEVNSILFIKNLSFKITAEEMYDLFGRYGPVRQIRLGNTVQTRGTAFVVYENVQDARRACEKLSGYNFMDRYLVVHYYNPERAKVDGQDLAARYAALEQVKQKYGVQL.

An interaction with pre-mRNA branch site region spans residues 9 to 22; the sequence is EVNSILFIKNLSFK. Residues 12-87 form the RRM domain; it reads SILFIKNLSF…RYLVVHYYNP (76 aa).

Its subcellular location is the nucleus. In terms of biological role, necessary for the splicing of pre-mRNA. In Schizosaccharomyces pombe (strain 972 / ATCC 24843) (Fission yeast), this protein is Splicing factor 3B subunit 6-like protein.